Here is an 87-residue protein sequence, read N- to C-terminus: Protein Tat (87 aa).

The segment at 1 to 21 is disordered; that stretch reads MDPVDPNLEPWNHPGSQPRTP. Residues 1-24 are interaction with human CREBBP; sequence MDPVDPNLEPWNHPGSQPRTPCNK. A transactivation region spans residues 1 to 48; the sequence is MDPVDPNLEPWNHPGSQPRTPCNKCYCKKCCYHCQMCFITKGLGISYG. The Zn(2+) site is built by C22, C25, and C27. The interval 22–37 is cysteine-rich; that stretch reads CNKCYCKKCCYHCQMC. K28 carries the N6-acetyllysine; by host PCAF modification. Zn(2+) contacts are provided by C30, H33, C34, and C37. The tract at residues 38–48 is core; sequence FITKGLGISYG. The segment at 45–87 is disordered; that stretch reads ISYGRKKRRQRRRPPQGNQAHQDPLPEQPSSQHRGDHPTGPKE. Positions 48–58 are enriched in basic residues; it reads GRKKRRQRRRP. Residues 49–57 carry the Nuclear localization signal, RNA-binding (TAR), and protein transduction motif; sequence RKKRRQRRR. Residues 49–87 are interaction with the host capping enzyme RNGTT; that stretch reads RKKRRQRRRPPQGNQAHQDPLPEQPSSQHRGDHPTGPKE. N6-acetyllysine; by host EP300 and GCN5L2 is present on residues K50 and K51. An asymmetric dimethylarginine; by host PRMT6 mark is found at R52 and R53. Positions 77-87 are enriched in basic and acidic residues; it reads HRGDHPTGPKE. Residues 78–80 carry the Cell attachment site motif; that stretch reads RGD.

Belongs to the lentiviruses Tat family. In terms of assembly, interacts with host CCNT1. Associates with the P-TEFb complex composed at least of Tat, P-TEFb (CDK9 and CCNT1), TAR RNA, RNA Pol II. Recruits the HATs CREBBP, TAF1/TFIID, EP300, PCAF and GCN5L2. Interacts with host KAT5/Tip60; this interaction targets the latter to degradation. Interacts with the host deacetylase SIRT1. Interacts with host capping enzyme RNGTT; this interaction stimulates RNGTT. Binds to host KDR, and to the host integrins ITGAV/ITGB3 and ITGA5/ITGB1. Interacts with host KPNB1/importin beta-1 without previous binding to KPNA1/importin alpha-1. Interacts with EIF2AK2. Interacts with host nucleosome assembly protein NAP1L1; this interaction may be required for the transport of Tat within the nucleus, since the two proteins interact at the nuclear rim. Interacts with host C1QBP/SF2P32; this interaction involves lysine-acetylated Tat. Interacts with the host chemokine receptors CCR2, CCR3 and CXCR4. Interacts with host DPP4/CD26; this interaction may trigger an anti-proliferative effect. Interacts with host LDLR. Interacts with the host extracellular matrix metalloproteinase MMP1. Interacts with host PRMT6; this interaction mediates Tat's methylation. Interacts with, and is ubiquitinated by MDM2/Hdm2. Interacts with host PSMC3 and HTATIP2. Interacts with STAB1; this interaction may overcome SATB1-mediated repression of IL2 and IL2RA (interleukin) in T cells by binding to the same domain than HDAC1. Interacts (when acetylated) with human CDK13, thereby increasing HIV-1 mRNA splicing and promoting the production of the doubly spliced HIV-1 protein Nef. Interacts with host TBP; this interaction modulates the activity of transcriptional pre-initiation complex. Interacts with host RELA. Interacts with host PLSCR1; this interaction negatively regulates Tat transactivation activity by altering its subcellular distribution. Asymmetrical arginine methylation by host PRMT6 seems to diminish the transactivation capacity of Tat and affects the interaction with host CCNT1. Post-translationally, acetylation by EP300, CREBBP, GCN5L2/GCN5 and PCAF regulates the transactivation activity of Tat. EP300-mediated acetylation of Lys-50 promotes dissociation of Tat from the TAR RNA through the competitive binding to PCAF's bromodomain. In addition, the non-acetylated Tat's N-terminus can also interact with PCAF. PCAF-mediated acetylation of Lys-28 enhances Tat's binding to CCNT1. Lys-50 is deacetylated by SIRT1. In terms of processing, polyubiquitination by host MDM2 does not target Tat to degradation, but activates its transactivation function and fosters interaction with CCNT1 and TAR RNA. Phosphorylated by EIF2AK2 on serine and threonine residues adjacent to the basic region important for TAR RNA binding and function. Phosphorylation of Tat by EIF2AK2 is dependent on the prior activation of EIF2AK2 by dsRNA.

It localises to the host nucleus. The protein resides in the host nucleolus. The protein localises to the host cytoplasm. It is found in the secreted. Transcriptional activator that increases RNA Pol II processivity, thereby increasing the level of full-length viral transcripts. Recognizes a hairpin structure at the 5'-LTR of the nascent viral mRNAs referred to as the transactivation responsive RNA element (TAR) and recruits the cyclin T1-CDK9 complex (P-TEFb complex) that will in turn hyperphosphorylate the RNA polymerase II to allow efficient elongation. The CDK9 component of P-TEFb and other Tat-activated kinases hyperphosphorylate the C-terminus of RNA Pol II that becomes stabilized and much more processive. Other factors such as HTATSF1/Tat-SF1, SUPT5H/SPT5, and HTATIP2 are also important for Tat's function. Besides its effect on RNA Pol II processivity, Tat induces chromatin remodeling of proviral genes by recruiting the histone acetyltransferases (HATs) CREBBP, EP300 and PCAF to the chromatin. This also contributes to the increase in proviral transcription rate, especially when the provirus integrates in transcriptionally silent region of the host genome. To ensure maximal activation of the LTR, Tat mediates nuclear translocation of NF-kappa-B by interacting with host RELA. Through its interaction with host TBP, Tat may also modulate transcription initiation. Tat can reactivate a latently infected cell by penetrating in it and transactivating its LTR promoter. In the cytoplasm, Tat is thought to act as a translational activator of HIV-1 mRNAs. Its function is as follows. Extracellular circulating Tat can be endocytosed by surrounding uninfected cells via the binding to several surface receptors such as CD26, CXCR4, heparan sulfate proteoglycans (HSPG) or LDLR. Neurons are rarely infected, but they internalize Tat via their LDLR. Through its interaction with nuclear HATs, Tat is potentially able to control the acetylation-dependent cellular gene expression. Modulates the expression of many cellular genes involved in cell survival, proliferation or in coding for cytokines or cytokine receptors. Tat plays a role in T-cell and neurons apoptosis. Tat induced neurotoxicity and apoptosis probably contribute to neuroAIDS. Circulating Tat also acts as a chemokine-like and/or growth factor-like molecule that binds to specific receptors on the surface of the cells, affecting many cellular pathways. In the vascular system, Tat binds to ITGAV/ITGB3 and ITGA5/ITGB1 integrins dimers at the surface of endothelial cells and competes with bFGF for heparin-binding sites, leading to an excess of soluble bFGF. The sequence is that of Protein Tat from Homo sapiens (Human).